Reading from the N-terminus, the 576-residue chain is MGEALSNLEIARGAKLLPIEEVGRSMGLREERHLEPYGRHVAKVDLCAIEDLSERPKAKYILVSAITPTPLGEGKTTTTVGLGQAFSHIGKRATIAIRQASMGPAFGIKGGAAGGGYSQVVPMERLNLHLTGDLHAVTEAHNMLAAMIDNHLYHGNGLGIEPHSISWRRVMDVNDRSLRNIVIGLGARTDGVPRQSGFDITAASEVMAILALASSLEDLRERLGRIVIGHDREGNPVSAEDVRGAGAMAVILKEAIKPNLMQTLEGTPALVHAGPFGNIATGNSSVVADLIGIRTADYLITEAGFGADMGAERFFNIKCRISGLEPDAAVVVATVRALKAHSGRYQIKAGAPLPEELLEENPQDVLAGAENLKKQIENIKLHGVPAVVAINAFPTDHPSEHKAIEEAAKEVGARCAVCRHFTEGGKGAVELARALEETIEENERERRRGGGGSFRFLYPLEMPLKQKIETIAREVYGAEGVEYDAEALRALEGFERAGFGRLPVCLAKTHLSLSSDPALKGAPRGWKLSVREVRASVGAGFIYPICGQMRTMPGLSAHPAAERIDLDGEGNVVGLF.

69–76 (TPLGEGKT) contacts ATP.

Belongs to the formate--tetrahydrofolate ligase family.

It carries out the reaction (6S)-5,6,7,8-tetrahydrofolate + formate + ATP = (6R)-10-formyltetrahydrofolate + ADP + phosphate. Its pathway is one-carbon metabolism; tetrahydrofolate interconversion. In Rubrobacter xylanophilus (strain DSM 9941 / JCM 11954 / NBRC 16129 / PRD-1), this protein is Formate--tetrahydrofolate ligase 2.